Consider the following 248-residue polypeptide: NLP effector protein Pc121494 (248 aa).

The N-terminal stretch at Met-1–Ala-19 is a signal peptide. Positions Gly-124 to Glu-130 match the Hepta-peptide GHRHDWE motif motif. An N-linked (GlcNAc...) asparagine glycan is attached at Asn-143.

Belongs to the Necrosis inducing protein (NPP1) family.

It is found in the secreted. Its function is as follows. Secreted effector that contributes strongly to virulence during infection by P.capsici. The protein is NLP effector protein Pc121494 of Phytophthora capsici.